The primary structure comprises 237 residues: Large ribosomal subunit protein uL1 (237 aa).

The protein belongs to the universal ribosomal protein uL1 family. In terms of assembly, part of the 50S ribosomal subunit.

Its function is as follows. Binds directly to 23S rRNA. The L1 stalk is quite mobile in the ribosome, and is involved in E site tRNA release. In terms of biological role, protein L1 is also a translational repressor protein, it controls the translation of the L11 operon by binding to its mRNA. This Leptothrix cholodnii (strain ATCC 51168 / LMG 8142 / SP-6) (Leptothrix discophora (strain SP-6)) protein is Large ribosomal subunit protein uL1.